Here is a 203-residue protein sequence, read N- to C-terminus: Imidazoleglycerol-phosphate dehydratase (203 aa).

A disordered region spans residues 184 to 203 (DPRRSSQIPSSKGVLEQAGQ).

Belongs to the imidazoleglycerol-phosphate dehydratase family.

It localises to the cytoplasm. It catalyses the reaction D-erythro-1-(imidazol-4-yl)glycerol 3-phosphate = 3-(imidazol-4-yl)-2-oxopropyl phosphate + H2O. It participates in amino-acid biosynthesis; L-histidine biosynthesis; L-histidine from 5-phospho-alpha-D-ribose 1-diphosphate: step 6/9. In Prochlorococcus marinus (strain NATL1A), this protein is Imidazoleglycerol-phosphate dehydratase.